The primary structure comprises 443 residues: MTHIQLDFSKTLEFFGEHELKQQQEIVKSIHKTIHEGTGAGSDFLGWVDLPVDYDKEEFSRIVEASKRIKENSDVLVVIGIGGSYLGARAAIEMLTSSFRNSNEYPEIVFVGNHLSSTYTKELVDYLADKDFSVNVISKSGTTTEPAVAFRLFKQLVEERYGKEEAQKRIFATTDKEKGALKQLATNEGYETFIVPDDVGGRYSVLTAVGLLPIATAGINIEAMMIGAAKAREELSSDKLEENIAYQYATIRNILYAKGYTTEMLINYEPSMQYFNEWWKQLFGESEGKDFKGIYPSSANYTTDLHSLGQYVQEGRRFLFETVVKVNHPKYDITIEKDSDDLDGLNYLAGKTIDEVNTKAFEGTLLAHTDGGVPNMIVNIPQLDEETFGYVVYFFELACAMSGYQLGVNPFNQPGVEAYKQNMFALLGKPGFEDLKKELEERL.

The Proton donor role is filled by glutamate 285. Catalysis depends on residues histidine 306 and lysine 420.

It belongs to the GPI family.

It localises to the cytoplasm. It carries out the reaction alpha-D-glucose 6-phosphate = beta-D-fructose 6-phosphate. The protein operates within carbohydrate biosynthesis; gluconeogenesis. Its pathway is carbohydrate degradation; glycolysis; D-glyceraldehyde 3-phosphate and glycerone phosphate from D-glucose: step 2/4. Its function is as follows. Catalyzes the reversible isomerization of glucose-6-phosphate to fructose-6-phosphate. This is Glucose-6-phosphate isomerase from Staphylococcus aureus (strain bovine RF122 / ET3-1).